Reading from the N-terminus, the 148-residue chain is Probable histone H2A.1 (148 aa).

Positions Met1 to Val23 are enriched in basic residues. Disordered stretches follow at residues Met1–Arg28 and Lys127–Ala148. Residues Ala131–Thr142 are compositionally biased toward low complexity. 2 short sequence motifs (SPKK motif) span residues Ser137 to Lys140 and Ser144 to Lys147.

Belongs to the histone H2A family. The nucleosome is a histone octamer containing two molecules each of H2A, H2B, H3 and H4 assembled in one H3-H4 heterotetramer and two H2A-H2B heterodimers. The octamer wraps approximately 147 bp of DNA.

Its subcellular location is the nucleus. The protein localises to the chromosome. Its function is as follows. Core component of nucleosome. Nucleosomes wrap and compact DNA into chromatin, limiting DNA accessibility to the cellular machineries which require DNA as a template. Histones thereby play a central role in transcription regulation, DNA repair, DNA replication and chromosomal stability. DNA accessibility is regulated via a complex set of post-translational modifications of histones, also called histone code, and nucleosome remodeling. This chain is Probable histone H2A.1, found in Medicago truncatula (Barrel medic).